The sequence spans 1092 residues: MEHSPEEGASPEPSGQPPATDSTRDGGSGVPPAGPGAASEALAVLTSFGRRLLVLVPVYLAGAAGLSVGFVLFGLALYLGWRRVRDGKERSLRAARQLLDDEERITAETLYMSHRELPAWVSFPDVEKAEWLNKIVAQVWPFLGQYMEKLLAETVAPAVRGANPHLQTFTFTRVELGEKPLRIIGVKVHPSQRKDQILLDLNVSYVGDVQIDVEVKKYFCKAGVKGMQLHGVLRVILEPLTGDLPIVGAVSMFFIKRPTLDINWTGMTNLLDIPGLSSLSDTMIMDSIAAFLVLPNRLLVPLVPDLQDVAQLRSPLPRGIIRIHLLAARGLSSKDKYVKGLIEGKSDPYALVRVGTQTFCSRVIDEELNPHWGETYEVIVHEVPGQEIEVEVFDKDPDKDDFLGRMKLDVGKVLQAGVLDNWYPLQGGQGQVHLRLEWLSLLPDAEKLDQVLQWNRGITSRPEPPSAAILVVYLDRAQDLPLKKGNKEPNPMVQLSVQDVTRESKATYSTNSPVWEEAFRFFLQDPRSQELDVQVKDDSRALTLGALTLPLARLLTASELTLDQWFQLSSSGPNSRLYMKLVMRILYLDYSEIRFPTVPGAQDWDRESLETGSSVDAPPRPYHTTPNSHFGTENVLRIHVLEAQDLIAKDRFLGGLVKGKSDPYVKLKVAGKSFRTHVVREDLNPRWNEVFEVIVTSIPGQELEIEVFDKDLDKDDFLGRYKVSLTTVLNSGFLDEWLTLEDVPSGRLHLRLERLTPRPTAAELEEVLQVNSLIQTQKSSELAAALLSVFLERAEDLPLRKGTKPPSPYATITVGETSHKTKTVSQSSAPVWEESASFLIRKPHAESLELQVRGEGTGTLGSVSLPLSELLQEDQLCLDHWFALSGQGQVLMRAQLGILVSQHSGVEAHSHSYSHSHSSSSLNDEPEALGGPTHPASPVLEVRHRLTHGDSPSEAPVGPLGQVKLTVWYHSDEQKLISIIHSCRALRQNGRDLPDPYVSVLLLPDKNRSTKRKTPQKKRTLNPEFNERFEWDLPLDGTLRRKLDVSVKSNSSFMSRERELLGKVQLDLAEIDLSQGAAQWYDLMDDRDKGGS.

Residue M1 is modified to N-acetylmethionine. The Cytoplasmic segment spans residues 1–28 (MEHSPEEGASPEPSGQPPATDSTRDGGS). Residues 1–36 (MEHSPEEGASPEPSGQPPATDSTRDGGSGVPPAGPG) form a disordered region. Residues 29–49 (GVPPAGPGAASEALAVLTSFG) traverse the membrane as a helical segment. At 50–52 (RRL) the chain is on the lumenal side. Residues 53–73 (LVLVPVYLAGAAGLSVGFVLF) traverse the membrane as a helical segment. The Cytoplasmic segment spans residues 74 to 1092 (GLALYLGWRR…LMDDRDKGGS (1019 aa)). Residues 125-303 (DVEKAEWLNK…LPNRLLVPLV (179 aa)) enclose the SMP-LTD domain. C2 domains are found at residues 302 to 423 (LVPD…DNWY), 444 to 570 (DAEK…QLSS), 616 to 738 (DAPP…DEWL), and 769 to 886 (QVNS…ALSG). Position 314 is a phosphoserine; by CDK5 (S314). The Ca(2+) site is built by K334, D335, D347, D394, D396, D398, D400, and D401. Residues 604–628 (WDRESLETGSSVDAPPRPYHTTPNS) are disordered. K804 carries the post-translational modification N6-acetyllysine. The residue at position 807 (S807) is a Phosphoserine. The tract at residues 909–937 (HSHSYSHSHSSSSLNDEPEALGGPTHPAS) is disordered. Over residues 911–921 (HSYSHSHSSSS) the composition is skewed to low complexity. Phosphoserine is present on residues S937 and S951. Residues 959 to 1081 (PLGQVKLTVW…DLSQGAAQWY (123 aa)) form the C2 5 domain. Phosphotyrosine is present on Y997. The tract at residues 1006-1013 (KNRSTKRK) is required for phosphatidylinositol 4,5-bisphosphate-dependent location at the cell membrane.

Belongs to the extended synaptotagmin family. As to quaternary structure, interacts with ESYT2 and ESYT3. Interacts with ADGRD1; inhibiting the G-protein-coupled receptor activity of ADGRD1. Interaction with ADGRD1 is abolished when cytosolic calcium increases, relieving ADGRD1 G-protein-coupled receptor activity. Interacts (phosphorylated form) with SLC2A4. In terms of processing, phosphorylated on Ser residues in insulin-treated adipocytes (in vitro); this promotes interaction with SLC2A4.

Its subcellular location is the endoplasmic reticulum membrane. The protein resides in the cell membrane. Binds calcium (via the C2 domains) and translocates to sites of contact between the endoplasmic reticulum and the cell membrane in response to increased cytosolic calcium levels. Helps tether the endoplasmic reticulum to the cell membrane and promotes the formation of appositions between the endoplasmic reticulum and the cell membrane. Acts as an inhibitor of ADGRD1 G-protein-coupled receptor activity in absence of cytosolic calcium. Binds glycerophospholipids in a barrel-like domain and may play a role in cellular lipid transport. This chain is Extended synaptotagmin-1 (Esyt1), found in Mus musculus (Mouse).